Here is a 647-residue protein sequence, read N- to C-terminus: Knirps-related protein (647 aa).

Positions 11–87 form a DNA-binding region, nuclear receptor; the sequence is NQTCKVCGEP…VGMSKSGSRY (77 aa). 2 consecutive NR C4-type zinc fingers follow at residues 14–34 and 51–75; these read CKVC…CEGC and CKNN…LKKC. Disordered stretches follow at residues 111-142, 196-274, 340-383, and 402-600; these read MAAH…KGMS, HKHP…LSPF, GAGQ…LLTN, and SQQQ…NSIL. Residues 120–134 are compositionally biased toward gly residues; sequence AGGGSSGGSGGGQGM. Composition is skewed to low complexity over residues 200-223 and 232-247; these read VVAS…VSSV and GGKS…ADGS. Residues 248-260 show a composition bias toward gly residues; that stretch reads HSGGGGGGGGGVT. 2 stretches are compositionally biased toward polar residues: residues 370–381 and 420–432; these read SPSTHANNNHLL and DYSI…PNSE. Composition is skewed to basic and acidic residues over residues 433 to 443 and 480 to 491; these read SGRERVKSRQN and QEERTPAGEDPR. A compositionally biased stretch (low complexity) spans 502–519; the sequence is LSMKTTGSSLSSKSSSPE. Positions 520 to 541 are enriched in acidic residues; sequence IEPETEISSDVEKNDTDDDDED. The span at 542 to 556 shows a compositional bias: basic and acidic residues; that stretch reads LKVTPEEEISVRETA. A compositionally biased stretch (polar residues) spans 567–579; the sequence is TTETAKTSIENTH. The segment covering 580 to 599 has biased composition (low complexity); the sequence is NNNNSISNNNNNNNNNNNSI.

This sequence belongs to the nuclear hormone receptor family. NR0 subfamily.

It is found in the nucleus. This Drosophila melanogaster (Fruit fly) protein is Knirps-related protein (knrl).